A 284-amino-acid polypeptide reads, in one-letter code: MTPAVTQTILTVRIARPHGYGYVLLSRGFSALNRPPPNYPGHIPLTTFERGALAVGSAIGSLLNPRRGDLIAALGEATATPYFIYRLRDAMLSDPTGRRILRDRPRISSKTLSIEYLRSLPPNTVGRTYVGWLDREGVGPDTRAPVQYIDDEECAYVMQRYRECHDFYHAITGLPVVVEGEVALKTFEFANTLLPMTGLSMFAVMRLKPAERERFWKLHLPWAIRSGLASKEVINVYWEEQLERDANELREELGIEKPADLREIRKMMRRQKAAEEAAKAKDGQ.

Positions 165, 166, 169, and 181 each coordinate Zn(2+).

Belongs to the COQ4 family. As to quaternary structure, component of a multi-subunit COQ enzyme complex, composed of at least COQ3, COQ4, COQ5, COQ6, COQ7 and COQ9. Zn(2+) is required as a cofactor.

Its subcellular location is the mitochondrion inner membrane. The catalysed reaction is a 4-hydroxy-3-methoxy-5-(all-trans-polyprenyl)benzoate + H(+) = a 2-methoxy-6-(all-trans-polyprenyl)phenol + CO2. Its pathway is cofactor biosynthesis; ubiquinone biosynthesis. Lyase that catalyzes the C1-decarboxylation of 4-hydroxy-3-methoxy-5-(all-trans-polyprenyl)benzoic acid into 2-methoxy-6-(all-trans-polyprenyl)phenol during ubiquinone biosynthesis. This Blastomyces gilchristii (strain SLH14081) (Blastomyces dermatitidis) protein is Ubiquinone biosynthesis protein COQ4, mitochondrial.